Consider the following 389-residue polypeptide: Phospho-N-acetylmuramoyl-pentapeptide-transferase (389 aa).

10 consecutive transmembrane segments (helical) span residues 25 to 45 (RAVM…PWVI), 73 to 93 (TMGG…WGDL), 97 to 117 (FIWI…VDDY), 135 to 155 (FWQS…VSEA), 190 to 210 (ISYP…IVGA), 222 to 242 (GLVI…AYVM), 258 to 278 (GAGE…AFLW), 286 to 306 (VFMG…VAVI), 311 to 331 (IVLF…MLQV), and 366 to 386 (QVVV…LSTL).

It belongs to the glycosyltransferase 4 family. MraY subfamily. The cofactor is Mg(2+).

The protein localises to the cell inner membrane. It catalyses the reaction UDP-N-acetyl-alpha-D-muramoyl-L-alanyl-gamma-D-glutamyl-meso-2,6-diaminopimeloyl-D-alanyl-D-alanine + di-trans,octa-cis-undecaprenyl phosphate = di-trans,octa-cis-undecaprenyl diphospho-N-acetyl-alpha-D-muramoyl-L-alanyl-D-glutamyl-meso-2,6-diaminopimeloyl-D-alanyl-D-alanine + UMP. The protein operates within cell wall biogenesis; peptidoglycan biosynthesis. In terms of biological role, catalyzes the initial step of the lipid cycle reactions in the biosynthesis of the cell wall peptidoglycan: transfers peptidoglycan precursor phospho-MurNAc-pentapeptide from UDP-MurNAc-pentapeptide onto the lipid carrier undecaprenyl phosphate, yielding undecaprenyl-pyrophosphoryl-MurNAc-pentapeptide, known as lipid I. The polypeptide is Phospho-N-acetylmuramoyl-pentapeptide-transferase (Burkholderia multivorans (strain ATCC 17616 / 249)).